A 370-amino-acid chain; its full sequence is Glutamate 5-kinase (370 aa).

K17 is an ATP binding site. Residues S57, D144, and N156 each contribute to the substrate site. Residues 176 to 177 (SD) and 220 to 226 (TGGMASK) contribute to the ATP site. Residues 282–360 (AGALTLDDGA…HELPVEMRRP (79 aa)) enclose the PUA domain.

The protein belongs to the glutamate 5-kinase family.

It localises to the cytoplasm. It catalyses the reaction L-glutamate + ATP = L-glutamyl 5-phosphate + ADP. It functions in the pathway amino-acid biosynthesis; L-proline biosynthesis; L-glutamate 5-semialdehyde from L-glutamate: step 1/2. Functionally, catalyzes the transfer of a phosphate group to glutamate to form L-glutamate 5-phosphate. The protein is Glutamate 5-kinase of Mycolicibacterium smegmatis (strain ATCC 700084 / mc(2)155) (Mycobacterium smegmatis).